Reading from the N-terminus, the 460-residue chain is Proline--tRNA ligase (460 aa).

This sequence belongs to the class-II aminoacyl-tRNA synthetase family. ProS type 3 subfamily. In terms of assembly, homodimer.

It localises to the cytoplasm. It carries out the reaction tRNA(Pro) + L-proline + ATP = L-prolyl-tRNA(Pro) + AMP + diphosphate. Functionally, catalyzes the attachment of proline to tRNA(Pro) in a two-step reaction: proline is first activated by ATP to form Pro-AMP and then transferred to the acceptor end of tRNA(Pro). This Methanococcus maripaludis (strain C5 / ATCC BAA-1333) protein is Proline--tRNA ligase.